The following is a 217-amino-acid chain: Peroxiredoxin Q, chloroplastic (217 aa).

The N-terminal 65 residues, 1–65 (MAAICLPVAK…PPPSYSARIS (65 aa)), are a transit peptide targeting the chloroplast. The Thioredoxin domain occupies 70 to 217 (VSKGSVPPQF…DETLKFLQSA (148 aa)). The active-site Cysteine sulfenic acid (-SOH) intermediate is C112. C112 and C117 form a disulfide bridge.

Belongs to the peroxiredoxin family. BCP/PrxQ subfamily. In terms of assembly, monomer. Expressed in the leaves, roots and stems.

The protein resides in the plastid. It is found in the chloroplast thylakoid lumen. It catalyses the reaction a hydroperoxide + [thioredoxin]-dithiol = an alcohol + [thioredoxin]-disulfide + H2O. Thiol-specific peroxidase that catalyzes the reduction of hydrogen peroxide and organic hydroperoxides to water and alcohols, respectively. Plays a role in cell protection against oxidative stress by detoxifying peroxides. Involved in both resistance against fungal disease and oxidative stress. In Gentiana triflora (Clustered gentian), this protein is Peroxiredoxin Q, chloroplastic (AFP1).